The chain runs to 458 residues: Transcription factor Atf1 (458 aa).

Positions 347 to 410 constitute a bZIP domain; that stretch reads EEKRRNFLER…VNLKTLLLAH (64 aa). The interval 349–378 is basic motif; it reads KRRNFLERNRVAALKCRQRKKQWLANLQNK. The leucine-zipper stretch occupies residues 389–403; it reads LTATVTQLREEIVNL.

It belongs to the bZIP family.

The protein localises to the nucleus. Transcription factor that positively regulates vegetative growth, reproduction, and osmotic stress response. The polypeptide is Transcription factor Atf1 (Penicillium expansum (Blue mold rot fungus)).